The primary structure comprises 635 residues: Interferon-induced GTP-binding protein Mx1 (635 aa).

In terms of domain architecture, Dynamin-type G spans 31 to 309; sequence DLALPAIAVI…LVHHIELSLP (279 aa). The interval 41–48 is G1 motif; that stretch reads GDQSSGKS. 41 to 48 contributes to the GTP binding site; it reads GDQSSGKS. Residues 66 to 68 form a G2 motif region; the sequence is VTR. The tract at residues 147–150 is G3 motif; that stretch reads DLPG. Residues 147–151 and 216–219 contribute to the GTP site; these read DLPGI and TKPD. The G4 motif stretch occupies residues 216 to 219; the sequence is TKPD. The G5 motif stretch occupies residues 248 to 251; sequence RCRG. In terms of domain architecture, GED spans 549-635; sequence LEELMRHLKS…MEARNYLVKF (87 aa).

It belongs to the TRAFAC class dynamin-like GTPase superfamily. Dynamin/Fzo/YdjA family.

Its subcellular location is the cytoplasm. This Ictalurus punctatus (Channel catfish) protein is Interferon-induced GTP-binding protein Mx1 (mx1).